Reading from the N-terminus, the 194-residue chain is Imidazoleglycerol-phosphate dehydratase (194 aa).

This sequence belongs to the imidazoleglycerol-phosphate dehydratase family.

The protein localises to the cytoplasm. The enzyme catalyses D-erythro-1-(imidazol-4-yl)glycerol 3-phosphate = 3-(imidazol-4-yl)-2-oxopropyl phosphate + H2O. It functions in the pathway amino-acid biosynthesis; L-histidine biosynthesis; L-histidine from 5-phospho-alpha-D-ribose 1-diphosphate: step 6/9. This chain is Imidazoleglycerol-phosphate dehydratase, found in Listeria monocytogenes serovar 1/2a (strain ATCC BAA-679 / EGD-e).